The sequence spans 189 residues: Elongation factor P (189 aa).

The residue at position 34 (Lys34) is an N6-(3,6-diaminohexanoyl)-5-hydroxylysine.

Belongs to the elongation factor P family. In terms of processing, may be beta-lysylated on the epsilon-amino group of Lys-34 by the combined action of EpmA and EpmB, and then hydroxylated on the C5 position of the same residue by EpmC (if this protein is present). Lysylation is critical for the stimulatory effect of EF-P on peptide-bond formation. The lysylation moiety may extend toward the peptidyltransferase center and stabilize the terminal 3-CCA end of the tRNA. Hydroxylation of the C5 position on Lys-34 may allow additional potential stabilizing hydrogen-bond interactions with the P-tRNA.

It localises to the cytoplasm. It functions in the pathway protein biosynthesis; polypeptide chain elongation. Involved in peptide bond synthesis. Alleviates ribosome stalling that occurs when 3 or more consecutive Pro residues or the sequence PPG is present in a protein, possibly by augmenting the peptidyl transferase activity of the ribosome. Modification of Lys-34 is required for alleviation. The sequence is that of Elongation factor P from Halorhodospira halophila (strain DSM 244 / SL1) (Ectothiorhodospira halophila (strain DSM 244 / SL1)).